The following is a 64-amino-acid chain: Toxin BmCa-1 (64 aa).

The signal sequence occupies residues 1–18; sequence MNTFVVVFLLLTAILCHA. Positions 19–27 are excised as a propeptide; it reads EHALDETAR. Disulfide bonds link Cys-29–Cys-43, Cys-36–Cys-49, and Cys-42–Cys-58.

It belongs to the scorpion calcin-like family. As to expression, expressed by the venom gland.

Its subcellular location is the secreted. Its function is as follows. May increase intracellular calcium release through the activation of nuclear inositol 1,4,5-trisphosphate receptors (ITPR) of cardiomyocytes, thereby causing an increase in the contraction frequency of these cells. This chain is Toxin BmCa-1, found in Olivierus martensii (Manchurian scorpion).